We begin with the raw amino-acid sequence, 334 residues long: Heat-inducible transcription repressor HrcA (334 aa).

The protein belongs to the HrcA family.

In terms of biological role, negative regulator of class I heat shock genes (grpE-dnaK-dnaJ and groELS operons). Prevents heat-shock induction of these operons. The polypeptide is Heat-inducible transcription repressor HrcA (Albidiferax ferrireducens (strain ATCC BAA-621 / DSM 15236 / T118) (Rhodoferax ferrireducens)).